We begin with the raw amino-acid sequence, 567 residues long: Berberine bridge enzyme-like D-1 (567 aa).

An N-terminal signal peptide occupies residues 1–33 (MKRNISMFLQLLLIILMMISFLFTSLLVPSVSA). A disulfide bridge connects residues Cys42 and Cys103. Asn50 is a glycosylation site (N-linked (GlcNAc...) asparagine). Positions 81–257 (SKPKPTVIIV…YAWKIRLLKV (177 aa)) constitute an FAD-binding PCMH-type domain. Pros-8alpha-FAD histidine is present on His118. Residues Asn364 and Asn378 are each glycosylated (N-linked (GlcNAc...) asparagine).

This sequence belongs to the oxygen-dependent FAD-linked oxidoreductase family. The cofactor is FAD. As to expression, mostly expressed in roots at low levels.

It is found in the vacuole. Its pathway is alkaloid biosynthesis; nicotine biosynthesis. In terms of biological role, involved in the biosynthesis of pyridine alkaloid natural products, leading mainly to the production of anabasine, anatabine, nicotine and nornicotine, effective deterrents against herbivores with antiparasitic and pesticide properties (neurotoxins); nornicotine serves as the precursor in the synthesis of the carcinogen compound N'-nitrosonornicotine (NNN). Catalyzes a late oxidation step subsequent to the pyridine ring condensation reaction in the biosynthesis of alkaloids. In Nicotiana tabacum (Common tobacco), this protein is Berberine bridge enzyme-like D-1.